Consider the following 159-residue polypeptide: 2-C-methyl-D-erythritol 2,4-cyclodiphosphate synthase (159 aa).

2 residues coordinate a divalent metal cation: Asp-10 and His-12. Residues 10–12 (DVH) and 36–37 (HS) contribute to the 4-CDP-2-C-methyl-D-erythritol 2-phosphate site. His-44 is an a divalent metal cation binding site. 4-CDP-2-C-methyl-D-erythritol 2-phosphate-binding positions include 58–60 (DIG), 63–67 (FSDTD), and Arg-144.

The protein belongs to the IspF family. In terms of assembly, homotrimer. Requires a divalent metal cation as cofactor.

It carries out the reaction 4-CDP-2-C-methyl-D-erythritol 2-phosphate = 2-C-methyl-D-erythritol 2,4-cyclic diphosphate + CMP. Its pathway is isoprenoid biosynthesis; isopentenyl diphosphate biosynthesis via DXP pathway; isopentenyl diphosphate from 1-deoxy-D-xylulose 5-phosphate: step 4/6. Its function is as follows. Involved in the biosynthesis of isopentenyl diphosphate (IPP) and dimethylallyl diphosphate (DMAPP), two major building blocks of isoprenoid compounds. Catalyzes the conversion of 4-diphosphocytidyl-2-C-methyl-D-erythritol 2-phosphate (CDP-ME2P) to 2-C-methyl-D-erythritol 2,4-cyclodiphosphate (ME-CPP) with a corresponding release of cytidine 5-monophosphate (CMP). The polypeptide is 2-C-methyl-D-erythritol 2,4-cyclodiphosphate synthase (Paraburkholderia phytofirmans (strain DSM 17436 / LMG 22146 / PsJN) (Burkholderia phytofirmans)).